We begin with the raw amino-acid sequence, 289 residues long: ATP synthase gamma chain (289 aa).

This sequence belongs to the ATPase gamma chain family. F-type ATPases have 2 components, CF(1) - the catalytic core - and CF(0) - the membrane proton channel. CF(1) has five subunits: alpha(3), beta(3), gamma(1), delta(1), epsilon(1). CF(0) has three main subunits: a, b and c.

The protein localises to the cell membrane. Produces ATP from ADP in the presence of a proton gradient across the membrane. The gamma chain is believed to be important in regulating ATPase activity and the flow of protons through the CF(0) complex. The protein is ATP synthase gamma chain of Alkaliphilus metalliredigens (strain QYMF).